The following is a 553-amino-acid chain: Dihydroxy-acid dehydratase (553 aa).

Aspartate 78 contacts Mg(2+). Residue cysteine 119 participates in [2Fe-2S] cluster binding. Residues aspartate 120 and lysine 121 each coordinate Mg(2+). Residue lysine 121 is modified to N6-carboxylysine. Cysteine 191 contributes to the [2Fe-2S] cluster binding site. A Mg(2+)-binding site is contributed by glutamate 444. The active-site Proton acceptor is the serine 470.

The protein belongs to the IlvD/Edd family. In terms of assembly, homodimer. Requires [2Fe-2S] cluster as cofactor. Mg(2+) serves as cofactor.

The enzyme catalyses (2R)-2,3-dihydroxy-3-methylbutanoate = 3-methyl-2-oxobutanoate + H2O. The catalysed reaction is (2R,3R)-2,3-dihydroxy-3-methylpentanoate = (S)-3-methyl-2-oxopentanoate + H2O. Its pathway is amino-acid biosynthesis; L-isoleucine biosynthesis; L-isoleucine from 2-oxobutanoate: step 3/4. It functions in the pathway amino-acid biosynthesis; L-valine biosynthesis; L-valine from pyruvate: step 3/4. Functions in the biosynthesis of branched-chain amino acids. Catalyzes the dehydration of (2R,3R)-2,3-dihydroxy-3-methylpentanoate (2,3-dihydroxy-3-methylvalerate) into 2-oxo-3-methylpentanoate (2-oxo-3-methylvalerate) and of (2R)-2,3-dihydroxy-3-methylbutanoate (2,3-dihydroxyisovalerate) into 2-oxo-3-methylbutanoate (2-oxoisovalerate), the penultimate precursor to L-isoleucine and L-valine, respectively. In Methanosarcina barkeri (strain Fusaro / DSM 804), this protein is Dihydroxy-acid dehydratase.